The primary structure comprises 354 residues: LAS seventeen-binding protein 5 (354 aa).

The VHS domain maps to 15–161; the sequence is TIFRIVSSRD…LGQTVKQRYS (147 aa). Disordered regions lie at residues 160-184 and 296-354; these read YSKS…DDSA and SAQD…HNKI. The span at 296-310 shows a compositional bias: basic and acidic residues; the sequence is SAQDDSSDESDHGSY.

Belongs to the LSB5 family. Interacts with SLA1 and LAS17.

It is found in the cytoplasm. The protein localises to the cell cortex. Its subcellular location is the cytoskeleton. In terms of biological role, essential for the organization of the actin cytoskeleton, fluid phase endocytosis and vesicle trafficking, together with YSC84. This chain is LAS seventeen-binding protein 5 (LSB5), found in Saccharomyces cerevisiae (strain ATCC 204508 / S288c) (Baker's yeast).